The sequence spans 86 residues: YcgL domain-containing protein XCC3997 (86 aa).

The YcgL domain occupies methionine 1–cysteine 83.

The chain is YcgL domain-containing protein XCC3997 from Xanthomonas campestris pv. campestris (strain ATCC 33913 / DSM 3586 / NCPPB 528 / LMG 568 / P 25).